The chain runs to 526 residues: Radial spoke head protein 6 homolog A (526 aa).

3 disordered regions span residues 180–231, 371–411, and 469–526; these read EGED…EENG, VKSE…DAEI, and PPAP…EEDD. Acidic residues-rich tracts occupy residues 181–212 and 374–395; these read GEDD…EAED and EEEE…EPEP. The segment covering 497-506 has biased composition (basic and acidic residues); the sequence is QALKAAKEEA. The span at 507–526 shows a compositional bias: acidic residues; that stretch reads EAAAEEMEEEEDEEEEEEDD.

Belongs to the flagellar radial spoke RSP4/6 family. In terms of assembly, component of sperm axonemal radial spoke complexes.

Its subcellular location is the cytoplasm. The protein localises to the cytoskeleton. The protein resides in the flagellum axoneme. Functions as part of radial spoke complexes in the axoneme of sperm flagella that play an important part in motility. The triple radial spokes (RS1, RS2 and RS3) are required to modulate beating of the sperm flagellum. The chain is Radial spoke head protein 6 homolog A (rsph6a) from Xenopus tropicalis (Western clawed frog).